The sequence spans 389 residues: Na(+)/H(+) antiporter NhaA (389 aa).

The next 11 helical transmembrane spans lie at 14 to 34 (AGGI…NSPL), 59 to 79 (LILW…GLEV), 95 to 115 (SLPT…YLLF), 124 to 144 (AGWA…MALL), 154 to 174 (VFLL…IALF), 177 to 197 (TDLS…LVGL), 213 to 233 (LILW…GVII), 257 to 277 (PWST…VYVG), 292 to 312 (IALG…YIAV), 328 to 348 (IAPV…IASL), and 363 to 383 (LGTL…LSKV).

It belongs to the NhaA Na(+)/H(+) (TC 2.A.33) antiporter family.

It localises to the cell inner membrane. It catalyses the reaction Na(+)(in) + 2 H(+)(out) = Na(+)(out) + 2 H(+)(in). In terms of biological role, na(+)/H(+) antiporter that extrudes sodium in exchange for external protons. The sequence is that of Na(+)/H(+) antiporter NhaA from Shewanella baltica (strain OS155 / ATCC BAA-1091).